Reading from the N-terminus, the 290-residue chain is MLKTIQDKARHRTRPLWAWLKLLWQRIDEDNMTTLAGNLAYVSLLSLVPLVAVVFALFAAFPMFSDVSIQLRHFIFANFLPATGDVIQRYIEQFVANSNKMTAVGACGLIVTALLLMYSIDSALNTIWRSKRARPKIYSFAVYWMILTLGPLLAGASLAISSYLLSLRWASDLNTVIDNVLRIFPLLLSWISFWLLYSIVPTIRVPNRDAIVGAFVAALLFEAGKKGFALYITMFPSYQLIYGVLAVIPILFVWVYWTWCIVLLGAEITVTLGEYRKLKQAAEQEEDDEP.

The next 6 membrane-spanning stretches (helical) occupy residues 44 to 64, 104 to 124, 140 to 160, 183 to 203, 210 to 230, and 244 to 264; these read LLSL…FPMF, VGAC…DSAL, FAVY…SLAI, IFPL…VPTI, AIVG…GFAL, and VLAV…IVLL.

Belongs to the UPF0761 family.

It is found in the cell inner membrane. In Escherichia coli O139:H28 (strain E24377A / ETEC), this protein is UPF0761 membrane protein YihY.